A 459-amino-acid polypeptide reads, in one-letter code: Transcription factor mlcR (459 aa).

A DNA-binding region (zn(2)-C6 fungal-type) is located at residues 21 to 53; that stretch reads CDRCHAQKLKCTGSNANLVRAQCQRCQQAGLRC. Disordered regions lie at residues 64–84 and 135–170; these read LHKEAAAGTTRATETSQPMTA and DPESFPGGWPQPNTFRDDANSNESSGIPDLGYDFEG. A compositionally biased stretch (low complexity) spans 69–78; the sequence is AAGTTRATET.

It is found in the nucleus. In terms of biological role, transcription factor that regulates the gene cluster that mediates the biosynthesis of compactin, also known as mevastatin or ML-236B, and which acts as a potent competitive inhibitor of HMG-CoA reductase. Binds to the consensus-binding motif 5'-WCGG-N(6)-TCGG-3' of target genes. The polypeptide is Transcription factor mlcR (Penicillium citrinum).